Reading from the N-terminus, the 1226-residue chain is MSCAATLSSAKDSTNANASGGGGGGGGGGAPTNSNTNTNTNTQSTAVGVVVSSAAGTGVGVGGGGGGGGSLPGGTTSSSSASAAGGVAAGGGGNSAAALVRRFSMEGVGARVIRGPDWKWNKQDGGEGHVGTVRNFESAEEVVVVWDNGTAANYRCAGAYDLRILDSAPTGVKHEGTMCDTCRQQPIFGIRWKCAECINYDLCSICYHGDKHHLRHRFYRITTPGGERTMLEPRRKSKKVLARGIFPGARVVRGVDWQWEDQDGGVGRRGKVNEIQDWSSASPRSAAYVIWDNGSKNLYRVGFEGMADLKVVNDAKGSNVYRDHLPLLGENGPGKGPHGFQIGDKVTVDLDLEIVQSLQHGHGGWTDGMFECLSNAGMVVGIDEDHDIVVAYNSGNRWTFNPAVLTKVSSPTTAPPEFQVGDIVKICSDVESIKILQRGHGEWADAMQLTLGKIGRVQQVYHDNDLKVEVGNTSWTYNPLAVCKVASSTASDGSCAPVIPSSERLSAILKKLFEPNVSGDATEEFVKAAANGFAARCEEYLAGAAQPSTSSASPSSGPDVNVNGVFAGHTALQAASQNGHIEVIQVLLRHAVDVEIEDKDGDRAVHHAAFGDEAAVIEILAKAGADLNARNKRRQTSLHIAVNKGHLNVVKTLLTLGCHPSLQDSEGDTPLHDAISKEHDEMLSLLLDFGADITLNNNNGFNALHHAALKGNPSAMKILLTKTNRPWIVEEKKDDGYTALHLAALNNHVEIAELLVHMGKANMDRQNVNLQTALHLAVERQHVQIVKLLVQDGADLNIPDKDGDTPLHEALRHHTLSQLKQLQDVEGFGKLLMGLRNANNKKASASIACFLAANGADLTLKNRKQQTPLDLCPDPNLCKTLVKCYNERKTDDSELPGNVAGTSSSARARAASGSLNQSSSVNMPLSSLAASSTFPAASSSSIFALNGIANEMSQSLHEDPPKSSASLDECLVCSDAKRDTVFKPCGHVSCCETCAPRVKKCLICRETVSSREKIDECLVCSDRRAAVFFRPCGHMVACEHCSALMKKCVLCRTQIDEILSFSLCCGGSGRPEKVSVAAGAMATVGLPLPDDRFMEAAAAAACANASGHSVAMNNTVVTPVAGSSNQLNSQNNLLAAAAASSNVSNLSAAGNAMVAPSNVNNFQMDDVQKLKQQLQDIKEQTMCPVCFDRIKNMVFLCGHGTCQMCGDQIEGCPICRKTVEKRILLF.

Polar residues predominate over residues 1-12; the sequence is MSCAATLSSAKD. Disordered stretches follow at residues 1-42 and 66-87; these read MSCA…NTNT and GGGGSLPGGTTSSSSASAAGGV. The segment covering 19-30 has biased composition (gly residues); it reads SGGGGGGGGGGA. Low complexity-rich tracts occupy residues 31–42 and 73–86; these read PTNSNTNTNTNT and GGTTSSSSASAAGG. Positions 100–168 constitute an MIB/HERC2 1 domain; sequence VRRFSMEGVG…AYDLRILDSA (69 aa). A ZZ-type zinc finger spans residues 174 to 226; that stretch reads HEGTMCDTCRQQPIFGIRWKCAECINYDLCSICYHGDKHHLRHRFYRITTPGG. Zn(2+)-binding residues include Cys-179, Cys-182, Cys-194, Cys-197, Cys-203, Cys-206, His-212, and His-216. An MIB/HERC2 2 domain is found at 237 to 315; that stretch reads SKKVLARGIF…MADLKVVNDA (79 aa). 8 ANK repeats span residues 567 to 596, 600 to 629, 633 to 662, 666 to 695, 699 to 731, 735 to 765, 769 to 798, and 802 to 833; these read AGHTALQAASQNGHIEVIQVLLRHAVDVEI, DGDRAVHHAAFGDEAAVIEILAKAGADLNA, RRQTSLHIAVNKGHLNVVKTLLTLGCHPSL, EGDTPLHDAISKEHDEMLSLLLDFGADITL, NGFNALHHAALKGNPSAMKILLTKTNRPWIVEE, DGYTALHLAALNNHVEIAELLVHMGKANMDR, NLQTALHLAVERQHVQIVKLLVQDGADLNI, and DGDTPLHEALRHHTLSQLKQLQDVEGFGKLLM. Residues 890–919 are disordered; it reads TDDSELPGNVAGTSSSARARAASGSLNQSS. Residues 900 to 914 are compositionally biased toward low complexity; it reads AGTSSSARARAASGS. RING-type zinc fingers lie at residues 970-1005 and 1017-1052; these read CLVCSDAKRDTVFKPCGHVSCCETCAPRVKKCLICR and CLVCSDRRAAVFFRPCGHMVACEHCSALMKKCVLCR. A coiled-coil region spans residues 1159-1181; sequence VNNFQMDDVQKLKQQLQDIKEQT. The RING-type 3 zinc-finger motif lies at 1183–1216; sequence CPVCFDRIKNMVFLCGHGTCQMCGDQIEGCPICR.

As to quaternary structure, interacts with intracellular domain of Dl and Ser. As to expression, ubiquitous in the wing imaginal disk (at protein level).

It localises to the cytoplasm. The protein resides in the cell cortex. It carries out the reaction S-ubiquitinyl-[E2 ubiquitin-conjugating enzyme]-L-cysteine + [acceptor protein]-L-lysine = [E2 ubiquitin-conjugating enzyme]-L-cysteine + N(6)-ubiquitinyl-[acceptor protein]-L-lysine.. The protein operates within protein modification; protein ubiquitination. Its function is as follows. E3 ubiquitin-protein ligase that mediates ubiquitination of Delta (Dl) and Serrate (Ser) receptors, which act as ligands of Notch proteins. Positively regulates the Notch signaling by ubiquitinating the intracellular domain of Dl and Ser, leading to endocytosis of Dl and Ser receptors. Regulates a subset of Notch signaling events, including wing margin specification, leg segmentation and vein determination, that are distinct from those events requiring neuralize (neur) activity. Also modulates lateral inhibition, a neur- and Dl-dependent signaling event, suggesting a distinct but partially complementary function with neur. The polypeptide is E3 ubiquitin-protein ligase mind-bomb (mib1) (Drosophila melanogaster (Fruit fly)).